An 815-amino-acid chain; its full sequence is SNF1 protein kinase subunit beta-1 (815 aa).

The span at 1–11 (MGNSPSTQDPS) shows a compositional bias: polar residues. Disordered stretches follow at residues 1–88 (MGNS…TIDK) and 117–148 (SDDH…KQTK). The N-myristoyl glycine moiety is linked to residue Gly2. Residues 12 to 31 (HSTKKEHGHHFHDAFNKDRQ) show a composition bias toward basic and acidic residues. A compositionally biased stretch (polar residues) spans 32-42 (GSITSQLFNNR). Ser33 bears the Phosphoserine mark. 2 stretches are compositionally biased toward basic and acidic residues: residues 72-88 (PSTD…TIDK) and 117-129 (SDDH…EEQV). 6 positions are modified to phosphoserine: Ser181, Ser198, Ser200, Ser206, Ser209, and Ser220. Disordered stretches follow at residues 310–335 (SHAN…NDDF), 363–389 (HQNK…FASL), and 410–444 (PLHP…SSIS). Residues 313–326 (NNNGNIENNTRNKG) show a composition bias toward low complexity. Position 331 is a phosphoserine (Ser331). Over residues 363–376 (HQNKTKKAQNKKIR) the composition is skewed to basic residues. Composition is skewed to low complexity over residues 377-389 (SASN…FASL) and 433-444 (HSNSMSSMSSIS). A kinase-interacting sequence (KIS); required for interaction with SNF1 region spans residues 473–716 (VSTDIASALK…LQQGGNIDAE (244 aa)). A phosphoserine mark is found at Ser494 and Ser497. Residues 583 to 616 (TLDEELPKRPELKRFPSSSRKSSYYSAKGVERPS) are disordered. Residues 587 to 596 (ELPKRPELKR) show a composition bias toward basic and acidic residues. Positions 599–608 (SSSRKSSYYS) are enriched in low complexity. Ser643 is subject to Phosphoserine. An association with SNF1 kinase complex (ASC) domain; required for interaction with SNF4 region spans residues 724–804 (SRYPVPDLPI…FITQVVYAPC (81 aa)).

Belongs to the 5'-AMP-activated protein kinase beta subunit family. In terms of assembly, component of the SNF1 kinase complex, a heterotrimeric complex composed of the catalytic alpha subunit SNF1, one of the three related beta subunits SIP1, SIP2 or GAL83, and the regulatory gamma subunit SNF4. The beta subunit serves as a bridge between the catalytic and the regulatory subunit. Interacts (via KIS domain) with SNF1. Interacts (via ASC domain) with SNF4. Phosphorylated by SNF1 in vitro.

It localises to the cytoplasm. The protein resides in the vacuole membrane. Its function is as follows. Beta subunit of the SNF1 kinase complex, which is required for transcriptional, metabolic, and developmental adaptations in response to glucose limitation. Has a structural role, mediating heterotrimer formation, and a regulatory role, defining carbon source-regulated subcellular location and substrate specificity of the SNF1 kinase complex. Promotes the PKA-regulated relocalization of the SNF1 kinase complex to the vacuolar membrane in response to various types of carbon stress. This chain is SNF1 protein kinase subunit beta-1 (SIP1), found in Saccharomyces cerevisiae (strain YJM789) (Baker's yeast).